The following is a 129-amino-acid chain: Phosphoribosyl-AMP cyclohydrolase (129 aa).

A Mg(2+)-binding site is contributed by Asp-87. Zn(2+) is bound at residue Cys-88. Mg(2+) is bound by residues Asp-89 and Asp-91. Positions 104 and 111 each coordinate Zn(2+).

The protein belongs to the PRA-CH family. In terms of assembly, homodimer. Mg(2+) is required as a cofactor. It depends on Zn(2+) as a cofactor.

The protein resides in the cytoplasm. The enzyme catalyses 1-(5-phospho-beta-D-ribosyl)-5'-AMP + H2O = 1-(5-phospho-beta-D-ribosyl)-5-[(5-phospho-beta-D-ribosylamino)methylideneamino]imidazole-4-carboxamide. The protein operates within amino-acid biosynthesis; L-histidine biosynthesis; L-histidine from 5-phospho-alpha-D-ribose 1-diphosphate: step 3/9. Catalyzes the hydrolysis of the adenine ring of phosphoribosyl-AMP. In Ruegeria sp. (strain TM1040) (Silicibacter sp.), this protein is Phosphoribosyl-AMP cyclohydrolase.